The sequence spans 554 residues: Eukaryotic translation initiation factor 3 subunit D-2 (554 aa).

Residues 291–305 form an RNA gate region; that stretch reads QFDLLTVNETALEPP. The tract at residues 530–554 is disordered; sequence NAFDSDGNEDEETSEDRPFLKSMAN.

It belongs to the eIF-3 subunit D family. As to quaternary structure, component of the eukaryotic translation initiation factor 3 (eIF-3) complex. The eIF-3 complex interacts with pix.

It localises to the cytoplasm. Functionally, mRNA cap-binding component of the eukaryotic translation initiation factor 3 (eIF-3) complex, which is involved in protein synthesis of a specialized repertoire of mRNAs and, together with other initiation factors, stimulates binding of mRNA and methionyl-tRNAi to the 40S ribosome. The eIF-3 complex specifically targets and initiates translation of a subset of mRNAs involved in cell proliferation. In the eIF-3 complex, eif3d specifically recognizes and binds the 7-methylguanosine cap of a subset of mRNAs. The polypeptide is Eukaryotic translation initiation factor 3 subunit D-2 (Drosophila mojavensis (Fruit fly)).